A 215-amino-acid chain; its full sequence is Cytochrome b6 (215 aa).

The chain crosses the membrane as a helical span at residues 32 to 52 (IFYCLGGITLTCFLVQVATGF). Heme c is bound at residue C35. Heme b-binding residues include H86 and H100. Transmembrane regions (helical) follow at residues 90 to 110 (ASMMVLMMILHVFRVYLTGGF), 116 to 136 (LTWVTGVVLGVLTASFGVTGY), and 186 to 206 (LHTFVLPLLTAVFMLMHFSMI). Heme b contacts are provided by H187 and H202.

This sequence belongs to the cytochrome b family. PetB subfamily. The 4 large subunits of the cytochrome b6-f complex are cytochrome b6, subunit IV (17 kDa polypeptide, PetD), cytochrome f and the Rieske protein, while the 4 small subunits are PetG, PetL, PetM and PetN. The complex functions as a dimer. It depends on heme b as a cofactor. Requires heme c as cofactor.

Its subcellular location is the plastid. It is found in the chloroplast thylakoid membrane. Functionally, component of the cytochrome b6-f complex, which mediates electron transfer between photosystem II (PSII) and photosystem I (PSI), cyclic electron flow around PSI, and state transitions. This chain is Cytochrome b6, found in Lotus japonicus (Lotus corniculatus var. japonicus).